Here is a 299-residue protein sequence, read N- to C-terminus: Leucine zipper transcription factor-like protein 1 (299 aa).

The stretch at 96–299 forms a coiled coil; it reads LKLQTDISEL…KRLAKYESED (204 aa). The interval 145 to 299 is interaction with BSS9; sequence GTTELLNKEI…KRLAKYESED (155 aa).

The protein belongs to the LZTFL1 family. Self-associates. Interacts with BBS9; the interaction mediates the association of LZTL1 with the BBsome complex and regulates BBSome ciliary trafficking. As to expression, highly expressed in testis. Expressed in brain, cerebellum, eye, heart, kidney, liver, lung and trachea. In small intestine, graded expression along the crypt-villus axis with high levels in the villus apex and lower levels in the crypt stem cells (at protein level). Not expressed in skeletal muscle and white adipose tissue.

It is found in the cytoplasm. In terms of biological role, regulates ciliary localization of the BBSome complex. Together with the BBSome complex, controls SMO ciliary trafficking and contributes to the sonic hedgehog (SHH) pathway regulation. May play a role in neurite outgrowth. May have tumor suppressor function. The protein is Leucine zipper transcription factor-like protein 1 (Lztfl1) of Mus musculus (Mouse).